A 482-amino-acid polypeptide reads, in one-letter code: Protein nucleotidyltransferase YdiU (482 aa).

Positions 88, 90, 91, 111, 123, 124, 174, and 181 each coordinate ATP. The active-site Proton acceptor is the D250. Positions 251 and 260 each coordinate Mg(2+). D260 contributes to the ATP binding site.

The protein belongs to the SELO family. Requires Mg(2+) as cofactor. Mn(2+) is required as a cofactor.

The catalysed reaction is L-seryl-[protein] + ATP = 3-O-(5'-adenylyl)-L-seryl-[protein] + diphosphate. It carries out the reaction L-threonyl-[protein] + ATP = 3-O-(5'-adenylyl)-L-threonyl-[protein] + diphosphate. It catalyses the reaction L-tyrosyl-[protein] + ATP = O-(5'-adenylyl)-L-tyrosyl-[protein] + diphosphate. The enzyme catalyses L-histidyl-[protein] + UTP = N(tele)-(5'-uridylyl)-L-histidyl-[protein] + diphosphate. The catalysed reaction is L-seryl-[protein] + UTP = O-(5'-uridylyl)-L-seryl-[protein] + diphosphate. It carries out the reaction L-tyrosyl-[protein] + UTP = O-(5'-uridylyl)-L-tyrosyl-[protein] + diphosphate. Nucleotidyltransferase involved in the post-translational modification of proteins. It can catalyze the addition of adenosine monophosphate (AMP) or uridine monophosphate (UMP) to a protein, resulting in modifications known as AMPylation and UMPylation. The polypeptide is Protein nucleotidyltransferase YdiU (Cronobacter sakazakii (strain ATCC BAA-894) (Enterobacter sakazakii)).